Consider the following 86-residue polypeptide: MGGISIWQLLIIAVIVVLLFGTNKLRTLGSDLGASIKGFKKAIGDDNQPQQAQKTSSDADFETKNITEKQSVAQSETSESKNKEQV.

A helical transmembrane segment spans residues 1–21 (MGGISIWQLLIIAVIVVLLFG). Residues 42 to 86 (AIGDDNQPQQAQKTSSDADFETKNITEKQSVAQSETSESKNKEQV) are disordered. Composition is skewed to polar residues over residues 47-58 (NQPQQAQKTSSD) and 68-77 (EKQSVAQSET).

It belongs to the TatA/E family. In terms of assembly, the Tat system comprises two distinct complexes: a TatABC complex, containing multiple copies of TatA, TatB and TatC subunits, and a separate TatA complex, containing only TatA subunits. Substrates initially bind to the TatABC complex, which probably triggers association of the separate TatA complex to form the active translocon.

The protein resides in the cell inner membrane. In terms of biological role, part of the twin-arginine translocation (Tat) system that transports large folded proteins containing a characteristic twin-arginine motif in their signal peptide across membranes. TatA could form the protein-conducting channel of the Tat system. This chain is Sec-independent protein translocase protein TatA, found in Photorhabdus laumondii subsp. laumondii (strain DSM 15139 / CIP 105565 / TT01) (Photorhabdus luminescens subsp. laumondii).